Reading from the N-terminus, the 501-residue chain is Glutamyl-tRNA(Gln) amidotransferase subunit A (501 aa).

Catalysis depends on charge relay system residues Lys80 and Ser155. Residue Ser179 is the Acyl-ester intermediate of the active site.

Belongs to the amidase family. GatA subfamily. Heterotrimer of A, B and C subunits.

It catalyses the reaction L-glutamyl-tRNA(Gln) + L-glutamine + ATP + H2O = L-glutaminyl-tRNA(Gln) + L-glutamate + ADP + phosphate + H(+). Functionally, allows the formation of correctly charged Gln-tRNA(Gln) through the transamidation of misacylated Glu-tRNA(Gln) in organisms which lack glutaminyl-tRNA synthetase. The reaction takes place in the presence of glutamine and ATP through an activated gamma-phospho-Glu-tRNA(Gln). The protein is Glutamyl-tRNA(Gln) amidotransferase subunit A of Cupriavidus taiwanensis (strain DSM 17343 / BCRC 17206 / CCUG 44338 / CIP 107171 / LMG 19424 / R1) (Ralstonia taiwanensis (strain LMG 19424)).